Reading from the N-terminus, the 246-residue chain is Alpha-tubulin N-acetyltransferase (246 aa).

Residues 21–202 (LTLVPDGVSR…NNFVVFHSFF (182 aa)) form the N-acetyltransferase domain. Residues 135–148 (FYVD…GYGK) and 172–181 (SNKLLGFLRK) each bind acetyl-CoA.

Belongs to the acetyltransferase ATAT1 family.

It catalyses the reaction L-lysyl-[alpha-tubulin] + acetyl-CoA = N(6)-acetyl-L-lysyl-[alpha-tubulin] + CoA + H(+). Functionally, specifically acetylates 'Lys-40' in alpha-tubulin on the lumenal side of microtubules. Promotes microtubule destabilization and accelerates microtubule dynamics; this activity may be independent of acetylation activity. Acetylates alpha-tubulin with a slow enzymatic rate, due to a catalytic site that is not optimized for acetyl transfer. Enters the microtubule through each end and diffuses quickly throughout the lumen of microtubules. Acetylates only long/old microtubules because of its slow acetylation rate since it does not have time to act on dynamically unstable microtubules before the enzyme is released. The chain is Alpha-tubulin N-acetyltransferase from Leishmania infantum.